The following is an 895-amino-acid chain: Ras and Rab interactor 2 (895 aa).

The SH2 domain occupies 97-190; that stretch reads WLQLSLSEEE…VLPFTLKLPY (94 aa). The tract at residues 284–361 is disordered; that stretch reads LSGGLKRPST…KPTPIPPPRL (78 aa). The segment covering 306–315 has biased composition (pro residues); it reads SPPPRPPPPA. Over residues 328 to 338 the composition is skewed to polar residues; the sequence is TETQTSMPETV. At Ser366 the chain carries Phosphoserine. Disordered stretches follow at residues 373-442 and 460-481; these read GAKT…SDSL and SLED…KSKK. Residues 430 to 441 show a composition bias toward low complexity; the sequence is SDMSISTSSSDS. Phosphoserine is present on Ser501. Thr509 carries the phosphothreonine modification. The VPS9 domain occupies 618–757; it reads DGSWKQLKEN…IKNFQEEQAA (140 aa). The Ras-associating domain maps to 787–878; the sequence is FQNYLRVAFQ…FHFVYKRIKN (92 aa).

Belongs to the RIN (Ras interaction/interference) family. In terms of assembly, homotetramer; probably composed of anti-parallel linkage of two parallel dimers. Interacts with Ras. Interacts with RAB5B, with a much higher affinity for GTP-bound activated RAB5B. Does not interact with other members of the Rab family. Widely expressed. Expressed in heart, kidney, lung placenta. Expressed at low level in skeletal muscle, spleen and peripheral blood.

It is found in the cytoplasm. Ras effector protein. May function as an upstream activator and/or downstream effector for RAB5B in endocytic pathway. May function as a guanine nucleotide exchange (GEF) of RAB5B, required for activating the RAB5 proteins by exchanging bound GDP for free GTP. The polypeptide is Ras and Rab interactor 2 (RIN2) (Homo sapiens (Human)).